Reading from the N-terminus, the 116-residue chain is Large ribosomal subunit protein bL17 (116 aa).

Belongs to the bacterial ribosomal protein bL17 family. Part of the 50S ribosomal subunit. Contacts protein L32.

The protein is Large ribosomal subunit protein bL17 of Prochlorococcus marinus (strain MIT 9301).